We begin with the raw amino-acid sequence, 412 residues long: Putative competence-damage inducible protein (412 aa).

It belongs to the CinA family.

The polypeptide is Putative competence-damage inducible protein (Bacillus cereus (strain B4264)).